The primary structure comprises 87 residues: Small ribosomal subunit protein bS20 (87 aa).

Residues 1-22 form a disordered region; it reads MAHHKSALKRIKQNKRKQFRNK.

It belongs to the bacterial ribosomal protein bS20 family.

Binds directly to 16S ribosomal RNA. This is Small ribosomal subunit protein bS20 from Geobacter metallireducens (strain ATCC 53774 / DSM 7210 / GS-15).